The sequence spans 217 residues: Thymidylate kinase (217 aa).

ATP is bound at residue 7-14 (GIDGAGKS).

The protein belongs to the thymidylate kinase family.

It catalyses the reaction dTMP + ATP = dTDP + ADP. Its function is as follows. Phosphorylation of dTMP to form dTDP in both de novo and salvage pathways of dTTP synthesis. This Chlorobaculum parvum (strain DSM 263 / NCIMB 8327) (Chlorobium vibrioforme subsp. thiosulfatophilum) protein is Thymidylate kinase.